We begin with the raw amino-acid sequence, 336 residues long: D-alanine--D-alanine ligase (336 aa).

Residues 124–330 enclose the ATP-grasp domain; sequence KMWFSALGIP…FTQYLSLVIN (207 aa). 154–209 contacts ATP; it reads ALEKWGSIFVKAASQGSSVGCYKVDEASKVLGVLKDAFGYAPYVIVEKTIKARELE. The Mg(2+) site is built by Asp284, Glu297, and Asn299.

It belongs to the D-alanine--D-alanine ligase family. It depends on Mg(2+) as a cofactor. The cofactor is Mn(2+).

The protein localises to the cytoplasm. It catalyses the reaction 2 D-alanine + ATP = D-alanyl-D-alanine + ADP + phosphate + H(+). Its pathway is cell wall biogenesis; peptidoglycan biosynthesis. In terms of biological role, cell wall formation. This Shewanella oneidensis (strain ATCC 700550 / JCM 31522 / CIP 106686 / LMG 19005 / NCIMB 14063 / MR-1) protein is D-alanine--D-alanine ligase.